We begin with the raw amino-acid sequence, 667 residues long: WD repeat-containing protein 48 homolog (667 aa).

8 WD repeats span residues 26–65, 71–110, 113–152, 164–203, 206–245, 248–287, 290–329, and 350–389; these read QHRN…NEKY, HHND…CMST, THRD…ALTA, GSKD…RSMK, GHTE…CVQT, VHKE…NKML, EEQA…RCTL, and KGGA…KKEQ. The disordered stretch occupies residues 591–615; it reads ETTPSGGNANNSLQNSQSDANSEGS.

It belongs to the WD repeat WDR48 family. Catalytic component of the Usp12-46 deubiquitylase complex consisting of Usp12-46, Wdr20 and Uaf1; regulatory subunit that, together wtih Wdr20, stabilizes Usp12-46. The Usp12-46 deubiquitylase complex associates with arr/arrow; the interaction leads to deubiquitination and stabilization of arr/arrow.

Regulatory component of the Usp12-46 deubiquitylase complex. activates deubiquitination by increasing the catalytic turnover without increasing the affinity of deubiquitinating enzymes for the substrate. The complex deubiquitylates the wg/wingless-signaling receptor arr/arrow, which stabilizes the receptor and increases its concentration at the cell surface; this enhances the sensitivity of cells to wg/wingless-signal stimulation. This increases the amplitude and spatial range of the signaling response to the wg/wingless morphogen gradient, facilitating the precise concentration-dependent regulation of its target genes. Together with Wdr20 and Usp12-46 required for wg/wingless-mediated signaling in the wing imaginal disc and for wg/wingless-dependent regulation of intestinal stem cell proliferation. The protein is WD repeat-containing protein 48 homolog of Drosophila ananassae (Fruit fly).